The primary structure comprises 219 residues: Small ribosomal subunit protein uS4 (219 aa).

One can recognise an S4 RNA-binding domain in the interval 112 to 174 (RRLQTQVLRL…GSSPLMSESH (63 aa)). The disordered stretch occupies residues 193 to 219 (KAAAEAKQARERPPERGGGRKKRGGRR). Residues 199–210 (KQARERPPERGG) are compositionally biased toward basic and acidic residues.

The protein belongs to the universal ribosomal protein uS4 family. In terms of assembly, part of the 30S ribosomal subunit. Contacts protein S5. The interaction surface between S4 and S5 is involved in control of translational fidelity.

Its function is as follows. One of the primary rRNA binding proteins, it binds directly to 16S rRNA where it nucleates assembly of the body of the 30S subunit. With S5 and S12 plays an important role in translational accuracy. The sequence is that of Small ribosomal subunit protein uS4 from Methanosarcina mazei (strain ATCC BAA-159 / DSM 3647 / Goe1 / Go1 / JCM 11833 / OCM 88) (Methanosarcina frisia).